The sequence spans 216 residues: Pyridoxine/pyridoxamine 5'-phosphate oxidase 1 (216 aa).

Residues 10 to 13 and K68 each bind substrate; that span reads RREY. FMN-binding positions include 63–68, 78–79, K85, and Q107; these read RIVLLK and YT. 3 residues coordinate substrate: Y125, R129, and S133. Residues 142–143 and W186 each bind FMN; that span reads QS. Position 192–194 (192–194) interacts with substrate; sequence RLH. R196 is a binding site for FMN.

The protein belongs to the pyridoxamine 5'-phosphate oxidase family. Homodimer. FMN serves as cofactor.

It catalyses the reaction pyridoxamine 5'-phosphate + O2 + H2O = pyridoxal 5'-phosphate + H2O2 + NH4(+). The catalysed reaction is pyridoxine 5'-phosphate + O2 = pyridoxal 5'-phosphate + H2O2. Its pathway is cofactor metabolism; pyridoxal 5'-phosphate salvage; pyridoxal 5'-phosphate from pyridoxamine 5'-phosphate: step 1/1. It functions in the pathway cofactor metabolism; pyridoxal 5'-phosphate salvage; pyridoxal 5'-phosphate from pyridoxine 5'-phosphate: step 1/1. Functionally, catalyzes the oxidation of either pyridoxine 5'-phosphate (PNP) or pyridoxamine 5'-phosphate (PMP) into pyridoxal 5'-phosphate (PLP). The chain is Pyridoxine/pyridoxamine 5'-phosphate oxidase 1 from Hydrogenovibrio crunogenus (strain DSM 25203 / XCL-2) (Thiomicrospira crunogena).